We begin with the raw amino-acid sequence, 332 residues long: MTGVFDSLVADMHSTQITASSTYHQHQQPPSGAGAGPGGNSNSSSSNSSLHKPQESPTLPVSTATDSSYYTNQQHPAGGGGGGASPYAHMGSYQYHASGLNNVSYSAKSSYDLGYTAAYTSYAPYGTSSSPVNNEPDKEDLEPEIRIVNGKPKKVRKPRTIYSSFQLAALQRRFQKTQYLALPERAELAASLGLTQTQVKIWFQNRRSKFKKMWKSGEIPTEQHPGASASPPCASPPVSAPASWDFGAPQRMAGGGPGSGGGGAGSSGSSPSSAASAFLGNYPWYHQASGSASHLQATAPLLHPSQTPQAHHHHHHHHHAGGGAPVSAGTIF.

A compositionally biased stretch (polar residues) spans 19–28 (ASSTYHQHQQ). The tract at residues 19-83 (ASSTYHQHQQ…QHPAGGGGGG (65 aa)) is disordered. Residues 40–49 (NSNSSSSNSS) are compositionally biased toward low complexity. Over residues 55-75 (ESPTLPVSTATDSSYYTNQQH) the composition is skewed to polar residues. The homeobox DNA-binding region spans 155-214 (VRKPRTIYSSFQLAALQRRFQKTQYLALPERAELAASLGLTQTQVKIWFQNRRSKFKKMW). 2 disordered regions span residues 219–272 (IPTE…SSPS) and 304–332 (PSQT…GTIF). Ser-235 carries the post-translational modification Phosphoserine. Gly residues predominate over residues 253 to 266 (AGGGPGSGGGGAGS). Basic residues predominate over residues 310 to 320 (AHHHHHHHHHA).

Belongs to the distal-less homeobox family. As to quaternary structure, interacts (via homeobox DNA-binding domain) with POU4F2; this interaction enhances retinal ganglion cell (RGC) differentiation. Post-translationally, phosphorylated by serine/threonine kinases. Expressed only in neural and other ectodermal structures of the head: the brain, the vomeronasal organ, and the preameloblasts of the teeth. Primarily expressed in the germinal cells of the ventral forebrain in the midgestational embryo, and in both dorsal and ventral ventricular zones in late embryogenesis and early postnatal life. Expressed in the inner nuclear layer of the retina.

The protein resides in the nucleus. Acts as a transcriptional activator. Activates transcription of CGA/alpha-GSU, via binding to the downstream activin regulatory element (DARE) in the gene promoter. Plays a role in terminal differentiation of interneurons, such as amacrine and bipolar cells in the developing retina. Likely to play a regulatory role in the development of the ventral forebrain. May play a role in craniofacial patterning and morphogenesis. This Mus musculus (Mouse) protein is Homeobox protein DLX-2 (Dlx2).